The primary structure comprises 450 residues: Tol-Pal system protein TolB (450 aa).

The N-terminal stretch at 1 to 37 is a signal peptide; sequence MIERNGLQRMPFRLNRRHMISGMASAAVLLGSRQALG.

This sequence belongs to the TolB family. In terms of assembly, the Tol-Pal system is composed of five core proteins: the inner membrane proteins TolA, TolQ and TolR, the periplasmic protein TolB and the outer membrane protein Pal. They form a network linking the inner and outer membranes and the peptidoglycan layer.

Its subcellular location is the periplasm. Functionally, part of the Tol-Pal system, which plays a role in outer membrane invagination during cell division and is important for maintaining outer membrane integrity. The sequence is that of Tol-Pal system protein TolB from Nitrobacter winogradskyi (strain ATCC 25391 / DSM 10237 / CIP 104748 / NCIMB 11846 / Nb-255).